The following is a 161-amino-acid chain: Peptidyl-prolyl cis-trans isomerase-like 1 (161 aa).

In terms of domain architecture, PPIase cyclophilin-type spans 1 to 155 (MATDVAFDTS…DEVKIIRARV (155 aa)).

It belongs to the cyclophilin-type PPIase family. PPIL1 subfamily.

The enzyme catalyses [protein]-peptidylproline (omega=180) = [protein]-peptidylproline (omega=0). Its function is as follows. PPIases accelerate the folding of proteins. It catalyzes the cis-trans isomerization of proline imidic peptide bonds in oligopeptides. This chain is Peptidyl-prolyl cis-trans isomerase-like 1 (cyp1), found in Aspergillus oryzae (strain ATCC 42149 / RIB 40) (Yellow koji mold).